We begin with the raw amino-acid sequence, 147 residues long: Urease accessory protein UreE (147 aa).

It belongs to the UreE family.

The protein resides in the cytoplasm. Functionally, involved in urease metallocenter assembly. Binds nickel. Probably functions as a nickel donor during metallocenter assembly. The polypeptide is Urease accessory protein UreE (Marinomonas sp. (strain MWYL1)).